Reading from the N-terminus, the 962-residue chain is Protease 3 (962 aa).

Residues 1–23 (MPRSIWFKALLLFVALWAPLSQA) form the signal peptide. Histidine 88 is a Zn(2+) binding site. Catalysis depends on glutamate 91, which acts as the Proton acceptor. Histidine 92 and glutamate 169 together coordinate Zn(2+).

It belongs to the peptidase M16 family. In terms of assembly, monomer. Zn(2+) is required as a cofactor.

It is found in the periplasm. It carries out the reaction Preferential cleavage of 16-Tyr-|-Leu-17 and 25-Phe-|-Tyr-26 bonds of oxidized insulin B chain. Also acts on other substrates of Mw less than 7 kDa such as insulin and glucagon.. Functionally, endopeptidase that degrades small peptides of less than 7 kDa, such as glucagon and insulin. The sequence is that of Protease 3 (ptrA) from Escherichia coli O6:H1 (strain CFT073 / ATCC 700928 / UPEC).